Here is a 110-residue protein sequence, read N- to C-terminus: Protein NATD1 (110 aa).

Residues 19–109 (EHDRQRRQFS…PLPQYLERLQ (91 aa)) enclose the N-acetyltransferase domain.

The protein belongs to the NATD1 family. In terms of tissue distribution, expressed in the heart, testis, kidney and lung.

This chain is Protein NATD1 (Natd1), found in Mus musculus (Mouse).